A 364-amino-acid polypeptide reads, in one-letter code: tRNA 2-selenouridine synthase (364 aa).

The 124-residue stretch at 14–137 (LIADTPIIDV…LRQTAIQATI (124 aa)) folds into the Rhodanese domain. C97 (S-selanylcysteine intermediate) is an active-site residue.

Belongs to the SelU family. As to quaternary structure, monomer.

It catalyses the reaction 5-methylaminomethyl-2-thiouridine(34) in tRNA + selenophosphate + (2E)-geranyl diphosphate + H2O + H(+) = 5-methylaminomethyl-2-selenouridine(34) in tRNA + (2E)-thiogeraniol + phosphate + diphosphate. The enzyme catalyses 5-methylaminomethyl-2-thiouridine(34) in tRNA + (2E)-geranyl diphosphate = 5-methylaminomethyl-S-(2E)-geranyl-thiouridine(34) in tRNA + diphosphate. It carries out the reaction 5-methylaminomethyl-S-(2E)-geranyl-thiouridine(34) in tRNA + selenophosphate + H(+) = 5-methylaminomethyl-2-(Se-phospho)selenouridine(34) in tRNA + (2E)-thiogeraniol. The catalysed reaction is 5-methylaminomethyl-2-(Se-phospho)selenouridine(34) in tRNA + H2O = 5-methylaminomethyl-2-selenouridine(34) in tRNA + phosphate. Involved in the post-transcriptional modification of the uridine at the wobble position (U34) of tRNA(Lys), tRNA(Glu) and tRNA(Gln). Catalyzes the conversion of 2-thiouridine (S2U-RNA) to 2-selenouridine (Se2U-RNA). Acts in a two-step process involving geranylation of 2-thiouridine (S2U) to S-geranyl-2-thiouridine (geS2U) and subsequent selenation of the latter derivative to 2-selenouridine (Se2U) in the tRNA chain. The sequence is that of tRNA 2-selenouridine synthase from Escherichia coli O17:K52:H18 (strain UMN026 / ExPEC).